We begin with the raw amino-acid sequence, 289 residues long: Probable early E4 33 kDa protein (289 aa).

The protein belongs to the adenoviridae E4 30 to 34 kDa protein family. As to quaternary structure, interacts with E1B-55k.

It is found in the host nucleus. Its subcellular location is the host cytoplasm. Its function is as follows. Plays a major role to prevent cellular inhibition of viral genome replication by nuclear bodies. Assembles an SCF-like E3 ubiquitin ligase complex based on the cellular proteins ELOB, ELOC, CUL5 and RBX1, in cooperation with viral E1B-55K. This viral RING-type ligase ubiquitinates cellular substrates prior to proteasomal degradation: p53/TP53, LIG4, MRE11-RAD50-NBS1 (MRN) complex, ITGA3, DAXX and BLM. This Mus musculus (Mouse) protein is Probable early E4 33 kDa protein.